Consider the following 265-residue polypeptide: Small ribosomal subunit protein eS4 (265 aa).

One can recognise an S4 RNA-binding domain in the interval 42–104 (LPLILIIRNR…TGENYRLLYD (63 aa)).

This sequence belongs to the eukaryotic ribosomal protein eS4 family.

It is found in the cytoplasm. This is Small ribosomal subunit protein eS4 (RPS4) from Oryza sativa subsp. japonica (Rice).